Consider the following 368-residue polypeptide: 4-hydroxy-3-methylbut-2-en-1-yl diphosphate synthase (flavodoxin) (368 aa).

[4Fe-4S] cluster contacts are provided by cysteine 271, cysteine 274, cysteine 306, and glutamate 313.

It belongs to the IspG family. Requires [4Fe-4S] cluster as cofactor.

The enzyme catalyses (2E)-4-hydroxy-3-methylbut-2-enyl diphosphate + oxidized [flavodoxin] + H2O + 2 H(+) = 2-C-methyl-D-erythritol 2,4-cyclic diphosphate + reduced [flavodoxin]. The protein operates within isoprenoid biosynthesis; isopentenyl diphosphate biosynthesis via DXP pathway; isopentenyl diphosphate from 1-deoxy-D-xylulose 5-phosphate: step 5/6. In terms of biological role, converts 2C-methyl-D-erythritol 2,4-cyclodiphosphate (ME-2,4cPP) into 1-hydroxy-2-methyl-2-(E)-butenyl 4-diphosphate. The sequence is that of 4-hydroxy-3-methylbut-2-en-1-yl diphosphate synthase (flavodoxin) from Haemophilus influenzae (strain ATCC 51907 / DSM 11121 / KW20 / Rd).